A 174-amino-acid chain; its full sequence is Histone deacetylase complex subunit SAP30 homolog (174 aa).

The Atypical zinc-finger motif lies at 22-70 (CCLLDDGERCRKQAGNASYSKRIQKTVTQRRLKLSIDSHARHIYICDFH).

The protein belongs to the SAP30 family. As to quaternary structure, component of the class 1 Sin3-histone deacetylase complex (HDAC).

The protein localises to the nucleus. In terms of biological role, required for the function of the class 1 Sin3-histone deacetylase complex (HDAC). The sequence is that of Histone deacetylase complex subunit SAP30 homolog from Anopheles gambiae (African malaria mosquito).